We begin with the raw amino-acid sequence, 208 residues long: Large ribosomal subunit protein uL3 (208 aa).

The disordered stretch occupies residues 134-153 (SKFHREAGSTGQCTSPGRTF).

The protein belongs to the universal ribosomal protein uL3 family. In terms of assembly, part of the 50S ribosomal subunit. Forms a cluster with proteins L14 and L19.

One of the primary rRNA binding proteins, it binds directly near the 3'-end of the 23S rRNA, where it nucleates assembly of the 50S subunit. This is Large ribosomal subunit protein uL3 from Treponema pallidum (strain Nichols).